A 229-amino-acid polypeptide reads, in one-letter code: Uridylate cyclase (229 aa).

The region spanning 47–178 (TVLYADLDGS…RAANYAAKLT (132 aa)) is the Guanylate cyclase domain. Residue Y50 participates in a ribonucleoside 5'-triphosphate binding. The Mn(2+) site is built by D52 and D96. A ribonucleoside 5'-triphosphate is bound at residue R97.

This sequence belongs to the adenylyl cyclase class-4/guanylyl cyclase family. Pyrimidine cyclase subfamily. In terms of assembly, homodimer. Requires Mn(2+) as cofactor.

It is found in the cytoplasm. The enzyme catalyses UTP = 3',5'-cyclic UMP + diphosphate. In terms of biological role, pycsar (pyrimidine cyclase system for antiphage resistance) provides immunity against bacteriophage. The pyrimidine cyclase (PycC) synthesizes cyclic nucleotides in response to infection; these serve as specific second messenger signals. The signals activate the adjacent effector, leading to bacterial cell death and abortive phage infection. A clade B Pycsar system. Functionally, the pyrimidine cyclase gene of a two-gene Pycsar system, generates cyclic UMP (cUMP) from UTP, has little to no activity on ATP, CTP or GTP. Expression of this and adjacent effector BcPycTIR (AC A0A0J5WTU0) probably confers resistance to bacteriophage. The genes are probably only expressed in response to bacteriophage infection. The polypeptide is Uridylate cyclase (Burkholderia cepacia (Pseudomonas cepacia)).